The chain runs to 122 residues: MPPKPSGKGQKKAGKAKGAPRTDKKRRRKRKESYGIYIYKVMKQVHPDTGISSRAMSIMNSFVNDIFERIAAEASRLAHYNKKSTITSREVQTAVRLLLPGELAKHAVSEGTKAVTKYTTSK.

The tract at residues 1–31 is disordered; it reads MPPKPSGKGQKKAGKAKGAPRTDKKRRRKRK. Pro2 carries the n,N-dimethylproline modification. The O-linked (GlcNAc) serine glycan is linked to Ser109. A Glycyl lysine isopeptide (Lys-Gly) (interchain with G-Cter in ubiquitin) cross-link involves residue Lys117.

The protein belongs to the histone H2B family. In terms of assembly, the nucleosome is a histone octamer containing two molecules each of H2A, H2B, H3 and H4 assembled in one H3-H4 heterotetramer and two H2A-H2B heterodimers. The octamer wraps approximately 147 bp of DNA. Post-translationally, monoubiquitination of Lys-117 gives a specific tag for epigenetic transcriptional activation and is also prerequisite for histone H3 'Lys-4' and 'Lys-79' methylation. In terms of processing, glcNAcylation at Ser-109 promotes monoubiquitination of Lys-117. It fluctuates in response to extracellular glucose, and associates with transcribed genes.

It localises to the nucleus. The protein resides in the chromosome. Core component of nucleosome. Nucleosomes wrap and compact DNA into chromatin, limiting DNA accessibility to the cellular machineries which require DNA as a template. Histones thereby play a central role in transcription regulation, DNA repair, DNA replication and chromosomal stability. DNA accessibility is regulated via a complex set of post-translational modifications of histones, also called histone code, and nucleosome remodeling. The sequence is that of Histone H2B, gonadal from Asterias rubens (Common European starfish).